We begin with the raw amino-acid sequence, 380 residues long: MRLHEYQAKQIFSKHGIRVARGELATSVEDVRGIAEELGGKVVLKSQVLVGGRGKAGGIKKAYSVEEAVEKAKEMFGSVLKGHIVEKIYVEEMIEVQREMYAGLTIDRANKGIAAILSSVGGMDIEEIAVKHPEKIARIAVNPKWGLWDYQIRELLLNSQMPREYWKEVASILKTLYRIMVHYEAELVEINPLVVTPDGLVAADARLNIDDSALFRHRDLEKLRDYTEADQMERIAMEKGLNYVKLDGNVGVLANGAGMAMATMDLIYIYGGKPANFLDIGGGASAEVVREAINLILSDKNVKVVFINIFGGITRCDEVAKGLKEALADVSTPVVVRLAGTNEEEGRKIMDEFAKDRPNFHIVETMEEGAEKAVKLAEEV.

In terms of domain architecture, ATP-grasp spans 9–235 (KQIFSKHGIR…YTEADQMERI (227 aa)). ATP is bound by residues Lys45, 52–54 (GRG), Glu91, Ile94, and Glu99. Mg(2+) is bound by residues Asn191 and Asp204. Substrate is bound by residues Asn255 and 312-314 (GIT).

It belongs to the succinate/malate CoA ligase beta subunit family. As to quaternary structure, heterotetramer of two alpha and two beta subunits. Mg(2+) is required as a cofactor.

The enzyme catalyses succinate + ATP + CoA = succinyl-CoA + ADP + phosphate. The catalysed reaction is GTP + succinate + CoA = succinyl-CoA + GDP + phosphate. It functions in the pathway carbohydrate metabolism; tricarboxylic acid cycle; succinate from succinyl-CoA (ligase route): step 1/1. Succinyl-CoA synthetase functions in the citric acid cycle (TCA), coupling the hydrolysis of succinyl-CoA to the synthesis of either ATP or GTP and thus represents the only step of substrate-level phosphorylation in the TCA. The beta subunit provides nucleotide specificity of the enzyme and binds the substrate succinate, while the binding sites for coenzyme A and phosphate are found in the alpha subunit. The chain is Succinate--CoA ligase [ADP-forming] subunit beta 2 from Archaeoglobus fulgidus (strain ATCC 49558 / DSM 4304 / JCM 9628 / NBRC 100126 / VC-16).